The primary structure comprises 759 residues: Secretin XpsD (759 aa).

The first 21 residues, 1–21, serve as a signal peptide directing secretion; sequence MSERMTPRLFPVSLLIGLLAG. Cysteine 22 carries N-palmitoyl cysteine lipidation. The S-diacylglycerol cysteine moiety is linked to residue cysteine 22. A compositionally biased stretch (low complexity) spans 40–51; sequence VGAAGATQTTAE. The segment at 40–69 is disordered; the sequence is VGAAGATQTTAEQRADGNASAKPTPVIRRG. The interval 92–187 is N0; sequence GSATFNFEGE…APSTASPSAA (96 aa). The tract at residues 189 to 253 is N1; the sequence is GFEVRVVPLK…VQIFDVDWLS (65 aa). The tract at residues 254-323 is N2; that stretch reads GMSVGVFPIQ…IQQWLDRIDS (70 aa). The interval 326-474 is N3; the sequence is GGVRLFSYEL…SIRDVIEKLD (149 aa). The disordered stretch occupies residues 352-434; the sequence is GGRGNGGNSG…PPSTNQNGSV (83 aa). Gly residues predominate over residues 392 to 401; that stretch reads ATGGDIGGTS. The span at 425–434 shows a compositional bias: polar residues; the sequence is PPSTNQNGSV. Residues 479-734 are secretin; that stretch reads QVHIEAQIAE…VLITPSIVRN (256 aa). The s domain stretch occupies residues 736-759; the sequence is QDARDLTDEYGSKFKSMRPMDVHK.

This sequence belongs to the bacterial secretin family. GSP D subfamily. Forms a cylindrical channel with 15 subunits. Binds to XpsN.

It is found in the cell outer membrane. In terms of biological role, involved in a type II secretion system (T2SS, formerly general secretion pathway, GSP) for the export of proteins. This subunit forms the outer membrane channel. The protein is Secretin XpsD (xpsD) of Xanthomonas campestris pv. campestris (strain ATCC 33913 / DSM 3586 / NCPPB 528 / LMG 568 / P 25).